The following is a 352-amino-acid chain: Coproporphyrin III ferrochelatase (352 aa).

Serine 52 and tyrosine 121 together coordinate Fe-coproporphyrin III. Fe(2+) contacts are provided by histidine 178 and glutamate 267.

This sequence belongs to the ferrochelatase family.

The protein localises to the cytoplasm. It catalyses the reaction Fe-coproporphyrin III + 2 H(+) = coproporphyrin III + Fe(2+). The protein operates within porphyrin-containing compound metabolism; protoheme biosynthesis. Involved in coproporphyrin-dependent heme b biosynthesis. Catalyzes the insertion of ferrous iron into coproporphyrin III to form Fe-coproporphyrin III. This is Coproporphyrin III ferrochelatase from Propionibacterium freudenreichii subsp. freudenreichii.